The sequence spans 337 residues: MKRIAVLTSGGDAPGMNAAIRAVVRKAISEGMEVYGINRGYAGMVDGDIFPLGSKEVGDKISRGGTFLYSARYPEFAQLEGQLAGIEQLKKHGIEGVVVIGGDGSYHGAMRLTEHGFPAVGIPGTIDNDIAGTDYTIGFDTAVNTAVEAIDKLRDTSSSHGRTFVVEVMGRNAGDIALWAGIASGADQIIVPEEEFDIEKVASTIQYDFEHKGKNHHIIVLAEGVMSGEAFAQKLKEAGDKSDLRVTNLGHILRGGSPTARDRVIASWMGSHAVELLKEGKGGLAVGIHNEELVESPILGTAEEGALFSLTEEGKIIVNNPHKARLDFAALNRSLSQ.

Glycine 11 contacts ATP. An ADP-binding site is contributed by 21 to 25 (RAVVR). Residues 72–73 (RY) and 102–105 (GDGS) contribute to the ATP site. Aspartate 103 contacts Mg(2+). 125–127 (TID) contacts substrate. Aspartate 127 functions as the Proton acceptor in the catalytic mechanism. Arginine 154 is a binding site for ADP. Substrate contacts are provided by residues arginine 162 and 169–171 (MGR). ADP is bound by residues 185-187 (GAD), lysine 212, and 214-216 (KNH). Residues glutamate 223, arginine 245, and 251–254 (HILR) each bind substrate.

It belongs to the phosphofructokinase type A (PFKA) family. ATP-dependent PFK group I subfamily. Prokaryotic clade 'B1' sub-subfamily. As to quaternary structure, homotetramer. The cofactor is Mg(2+).

The protein localises to the cytoplasm. The catalysed reaction is beta-D-fructose 6-phosphate + ATP = beta-D-fructose 1,6-bisphosphate + ADP + H(+). It functions in the pathway carbohydrate degradation; glycolysis; D-glyceraldehyde 3-phosphate and glycerone phosphate from D-glucose: step 3/4. With respect to regulation, allosterically activated by ADP and other diphosphonucleosides, and allosterically inhibited by phosphoenolpyruvate. Catalyzes the phosphorylation of D-fructose 6-phosphate to fructose 1,6-bisphosphate by ATP, the first committing step of glycolysis. This Streptococcus pyogenes serotype M28 (strain MGAS6180) protein is ATP-dependent 6-phosphofructokinase.